A 237-amino-acid chain; its full sequence is MPINPLYLFPNLFTASSIFLGMMSIFYASSYQFVMACWLVVASLILDGLDGRVARLTNTTSKFGIEFDSLADVVAFGVAPSLITYFYVGYNFGRIGMAVSALFVIFGAIRLARFNISTNTSDPYSFIGIPIPAAAVLVVLCVLLDNKYHFLEGNTEKLFLGFIVLLGVLMVSNIRYPNFKKVKWNLKLFILVLIFLSLVFVRPLEALSVFMGLYLIYGIIRWIFLMVKIIFNKNKSA.

A run of 8 helical transmembrane segments spans residues 3-23 (INPLYLFPNLFTASSIFLGMM), 25-45 (IFYASSYQFVMACWLVVASLI), 73-93 (VVAFGVAPSLITYFYVGYNFG), 95-115 (IGMAVSALFVIFGAIRLARFN), 124-144 (YSFIGIPIPAAAVLVVLCVLL), 150-170 (FLEGNTEKLFLGFIVLLGVLM), 184-204 (WNLKLFILVLIFLSLVFVRPL), and 207-227 (LSVFMGLYLIYGIIRWIFLMV).

The protein belongs to the CDP-alcohol phosphatidyltransferase class-I family.

It localises to the cell membrane. It carries out the reaction a CDP-1,2-diacyl-sn-glycerol + L-serine = a 1,2-diacyl-sn-glycero-3-phospho-L-serine + CMP + H(+). The chain is CDP-diacylglycerol--serine O-phosphatidyltransferase (pssA) from Helicobacter pylori (strain J99 / ATCC 700824) (Campylobacter pylori J99).